The sequence spans 377 residues: N-acetyldiaminopimelate deacetylase (377 aa).

The active site involves D70. The active-site Proton acceptor is E129.

Belongs to the peptidase M20A family. N-acetyldiaminopimelate deacetylase subfamily.

The catalysed reaction is N-acetyl-(2S,6S)-2,6-diaminopimelate + H2O = (2S,6S)-2,6-diaminopimelate + acetate. It participates in amino-acid biosynthesis; L-lysine biosynthesis via DAP pathway; LL-2,6-diaminopimelate from (S)-tetrahydrodipicolinate (acetylase route): step 3/3. Functionally, catalyzes the conversion of N-acetyl-diaminopimelate to diaminopimelate and acetate. This Streptococcus thermophilus (strain CNRZ 1066) protein is N-acetyldiaminopimelate deacetylase.